Reading from the N-terminus, the 305-residue chain is UDP-3-O-acyl-N-acetylglucosamine deacetylase (305 aa).

Residues His78, His237, and Asp241 each coordinate Zn(2+). His264 (proton donor) is an active-site residue.

The protein belongs to the LpxC family. The cofactor is Zn(2+).

It catalyses the reaction a UDP-3-O-[(3R)-3-hydroxyacyl]-N-acetyl-alpha-D-glucosamine + H2O = a UDP-3-O-[(3R)-3-hydroxyacyl]-alpha-D-glucosamine + acetate. Its pathway is glycolipid biosynthesis; lipid IV(A) biosynthesis; lipid IV(A) from (3R)-3-hydroxytetradecanoyl-[acyl-carrier-protein] and UDP-N-acetyl-alpha-D-glucosamine: step 2/6. Functionally, catalyzes the hydrolysis of UDP-3-O-myristoyl-N-acetylglucosamine to form UDP-3-O-myristoylglucosamine and acetate, the committed step in lipid A biosynthesis. The polypeptide is UDP-3-O-acyl-N-acetylglucosamine deacetylase (Paraburkholderia phytofirmans (strain DSM 17436 / LMG 22146 / PsJN) (Burkholderia phytofirmans)).